The chain runs to 296 residues: NAD kinase (296 aa).

D72 serves as the catalytic Proton acceptor. Residues 72 to 73 (DG), 146 to 147 (ND), R157, K174, D176, 187 to 192 (TAYALS), and Q247 contribute to the NAD(+) site.

The protein belongs to the NAD kinase family. A divalent metal cation serves as cofactor.

It is found in the cytoplasm. The enzyme catalyses NAD(+) + ATP = ADP + NADP(+) + H(+). In terms of biological role, involved in the regulation of the intracellular balance of NAD and NADP, and is a key enzyme in the biosynthesis of NADP. Catalyzes specifically the phosphorylation on 2'-hydroxyl of the adenosine moiety of NAD to yield NADP. This is NAD kinase from Pseudomonas putida (strain ATCC 700007 / DSM 6899 / JCM 31910 / BCRC 17059 / LMG 24140 / F1).